A 451-amino-acid chain; its full sequence is Lysine histidine transporter-like 3 (451 aa).

Topologically, residues 1–40 are cytoplasmic; sequence MKGIPSSSNQILNQDLVEDQSFELEDWLPITASRNANWYY. A helical transmembrane segment spans residues 41–61; sequence SAFHNVTAIVGAGVLGLPYAM. The Extracellular segment spans residues 62–63; sequence SE. Residues 64 to 84 traverse the membrane as a helical segment; the sequence is LGWGPGVVVLILSWVITLYTF. At 85 to 115 the chain is on the cytoplasmic side; that stretch reads WQMIEMHEMFEGKRFDRYHELGQAAFGKKLG. The chain crosses the membrane as a helical span at residues 116 to 136; sequence LYIVVPLQLLVETSACIVYMV. Residues 137–159 lie on the Extracellular side of the membrane; sequence TGGESLKKIHQLSVGDYECRKLK. A helical transmembrane segment spans residues 160–177; sequence VRHFILIFASSQFVLSLL. The Cytoplasmic portion of the chain corresponds to 178 to 182; sequence KNFNS. The chain crosses the membrane as a helical span at residues 183-203; it reads ISGVSLVAAVMSMSYSTIAWV. Residues 204-227 lie on the Extracellular side of the membrane; the sequence is ASLTKGVANNVEYGYKRRNNTSVP. Residues 228-248 form a helical membrane-spanning segment; the sequence is LAFLGALGEMAFAYAGHNVVL. Residues 249–269 are Cytoplasmic-facing; sequence EIQATIPSTPENPSKRPMWKG. The chain crosses the membrane as a helical span at residues 270–290; that stretch reads AIVAYIIVAFCYFPVALVGFW. Topologically, residues 291–309 are extracellular; sequence TFGNNVEENILKTLRGPKG. A helical membrane pass occupies residues 310 to 330; that stretch reads LIIVANIFVIIHLMGSYQVYA. The Cytoplasmic segment spans residues 331–358; that stretch reads MPVFDMIESVMIKKWHFSPTRVLRFTIR. A helical transmembrane segment spans residues 359–379; sequence WTFVAATMGIAVALPHFSALL. Residue serine 380 is a topological domain, extracellular. Residues 381–401 form a helical membrane-spanning segment; the sequence is FFGGFIFAPTTYFIPCIIWLI. Residues 402–413 are Cytoplasmic-facing; the sequence is LKKPKRFSLSWC. Residues 414-434 form a helical membrane-spanning segment; that stretch reads INWICIILGVLVMIIAPIGGL. Topologically, residues 435–451 are extracellular; sequence AKLMNALKQPDSSCKST.

The protein belongs to the amino acid/polyamine transporter 2 family. Amino acid/auxin permease (AAAP) (TC 2.A.18.2) subfamily.

The protein resides in the cell membrane. Its function is as follows. Amino acid transporter. The polypeptide is Lysine histidine transporter-like 3 (Arabidopsis thaliana (Mouse-ear cress)).